The sequence spans 376 residues: Lipoprotein p33 (376 aa).

The first 30 residues, 1–30 (MKIKKIKLLKALALTGAFGIVATVPVIVYS), serve as a signal peptide directing secretion. The N-palmitoyl cysteine moiety is linked to residue Cys31. The S-diacylglycerol cysteine moiety is linked to residue Cys31. Positions 35–59 (DNNGGTGDNNTGGGGSGTDQQQGTT) are disordered. Residues 38–51 (GGTGDNNTGGGGSG) are compositionally biased toward gly residues.

It belongs to the p35 lipoprotein family.

The protein localises to the cell membrane. This chain is Lipoprotein p33, found in Malacoplasma penetrans (Mycoplasma penetrans).